Reading from the N-terminus, the 363-residue chain is FMNH(2)-dependent dimethylsulfone monooxygenase (363 aa).

Belongs to the SsuD family.

It catalyses the reaction dimethyl sulfone + FMNH2 + O2 = methanesulfinate + FMN + formaldehyde + H2O + 2 H(+). Involved in the dimethyl sulfide degradation pathway. Catalyzes the oxidation of dimethylsulfone (DMSO2) to yield methanesulfinate, which is oxidized spontaneously to methanesulfonate in the presence of dioxygen and FMNH(2). In Pseudomonas putida (Arthrobacter siderocapsulatus), this protein is FMNH(2)-dependent dimethylsulfone monooxygenase.